A 269-amino-acid chain; its full sequence is MTVVSIMWSLVQVQVLVAVALAFLVGGAWCGPPKVPPGKNITAKYGSDWLDAKATWYGKPTGAGPDDNGGGCGYKDVNKAPFNSMGACGNVPIFKDGLGCGSCFEIKCDKPAECSGKPVVVYITDMNYEPIAAYHFDLAGTAFGAMAKKGEEEKLRKAGIIDMQFRRVKCKYGSKVTFHLEKGCNPNYLALLVKYVDGDGDIVAVDIKEKGSDTYEPLKHSWGAIWRKDSDKPIKGPITVQLTTEGGTKTVYDDVIPAGWKPNTAYTAK.

Positions 1–30 (MTVVSIMWSLVQVQVLVAVALAFLVGGAWC) are cleaved as a signal peptide. Asparagine 40 carries an N-linked (GlcNAc...) asparagine glycan. Residues 69 to 175 (GGGCGYKDVN…RRVKCKYGSK (107 aa)) form the Expansin-like EG45 domain. 3 disulfide bridges follow: cysteine 72–cysteine 100, cysteine 103–cysteine 170, and cysteine 108–cysteine 114. The 82-residue stretch at 187 to 268 (NYLALLVKYV…GWKPNTAYTA (82 aa)) folds into the Expansin-like CBD domain.

This sequence belongs to the expansin family. Expansin B subfamily. Expressed in pollen.

The protein resides in the secreted. It localises to the cell wall. Its subcellular location is the membrane. Its function is as follows. May aid fertilization by loosening the cell wall of the stigma and style, thereby facilitating penetration of the pollen tube. Acts selectively on grass cell walls, which are relatively poor in pectins and xyloglucans and rich in glucuronoarabinoxylans and (1-3),(1-4)-beta-D-glucans, when compared with cell walls of other angiosperms, including other monocots. The sequence is that of Expansin-B11 (EXPB11) from Zea mays (Maize).